Consider the following 391-residue polypeptide: 4-hydroxy-3-methylbut-2-en-1-yl diphosphate synthase (flavodoxin) (391 aa).

Positions 282, 285, 317, and 324 each coordinate [4Fe-4S] cluster.

This sequence belongs to the IspG family. [4Fe-4S] cluster serves as cofactor.

The catalysed reaction is (2E)-4-hydroxy-3-methylbut-2-enyl diphosphate + oxidized [flavodoxin] + H2O + 2 H(+) = 2-C-methyl-D-erythritol 2,4-cyclic diphosphate + reduced [flavodoxin]. Its pathway is isoprenoid biosynthesis; isopentenyl diphosphate biosynthesis via DXP pathway; isopentenyl diphosphate from 1-deoxy-D-xylulose 5-phosphate: step 5/6. Converts 2C-methyl-D-erythritol 2,4-cyclodiphosphate (ME-2,4cPP) into 1-hydroxy-2-methyl-2-(E)-butenyl 4-diphosphate. This is 4-hydroxy-3-methylbut-2-en-1-yl diphosphate synthase (flavodoxin) from Acidothermus cellulolyticus (strain ATCC 43068 / DSM 8971 / 11B).